We begin with the raw amino-acid sequence, 73 residues long: UPF0346 protein BLi02292/BL01432 (73 aa).

It belongs to the UPF0346 family.

In Bacillus licheniformis (strain ATCC 14580 / DSM 13 / JCM 2505 / CCUG 7422 / NBRC 12200 / NCIMB 9375 / NCTC 10341 / NRRL NRS-1264 / Gibson 46), this protein is UPF0346 protein BLi02292/BL01432.